The primary structure comprises 307 residues: Probable GTP 3',8-cyclase (307 aa).

In terms of domain architecture, Radical SAM core spans 5 to 227 (AYGRRISSLR…RRTKYYLGGA (223 aa)). R14 contacts GTP. [4Fe-4S] cluster is bound by residues C21 and C25. Position 27 (Y27) interacts with S-adenosyl-L-methionine. C28 lines the [4Fe-4S] cluster pocket. GTP is bound at residue K61. S-adenosyl-L-methionine is bound at residue G65. Position 89 (T89) interacts with GTP. S113 provides a ligand contact to S-adenosyl-L-methionine. K151 lines the GTP pocket. C241 and C244 together coordinate [4Fe-4S] cluster. 246 to 248 (RLR) lines the GTP pocket. C258 serves as a coordination point for [4Fe-4S] cluster.

It belongs to the radical SAM superfamily. MoaA family. [4Fe-4S] cluster serves as cofactor.

It carries out the reaction GTP + AH2 + S-adenosyl-L-methionine = (8S)-3',8-cyclo-7,8-dihydroguanosine 5'-triphosphate + 5'-deoxyadenosine + L-methionine + A + H(+). The protein operates within cofactor biosynthesis; molybdopterin biosynthesis. Its function is as follows. Catalyzes the cyclization of GTP to (8S)-3',8-cyclo-7,8-dihydroguanosine 5'-triphosphate. The polypeptide is Probable GTP 3',8-cyclase (Methanocella arvoryzae (strain DSM 22066 / NBRC 105507 / MRE50)).